We begin with the raw amino-acid sequence, 610 residues long: Elongation factor 4 (610 aa).

The tr-type G domain occupies 11–193; sequence EKIRNFSIIA…QIVEKVPAPS (183 aa). Residues 23-28 and 140-143 contribute to the GTP site; these read DHGKST and NKID.

The protein belongs to the TRAFAC class translation factor GTPase superfamily. Classic translation factor GTPase family. LepA subfamily.

It is found in the cell membrane. It carries out the reaction GTP + H2O = GDP + phosphate + H(+). In terms of biological role, required for accurate and efficient protein synthesis under certain stress conditions. May act as a fidelity factor of the translation reaction, by catalyzing a one-codon backward translocation of tRNAs on improperly translocated ribosomes. Back-translocation proceeds from a post-translocation (POST) complex to a pre-translocation (PRE) complex, thus giving elongation factor G a second chance to translocate the tRNAs correctly. Binds to ribosomes in a GTP-dependent manner. In Streptococcus uberis (strain ATCC BAA-854 / 0140J), this protein is Elongation factor 4.